The following is a 177-amino-acid chain: Ribosome rescue factor SmrB (177 aa).

A disordered region spans residues 22-45; that stretch reads SKKLRQDTIIHQPSKNFSEQQKQR. A compositionally biased stretch (polar residues) spans 30–41; sequence IIHQPSKNFSEQ. The Smr domain occupies 98-173; it reads LDMHGMKQDE…GAGAILVLLS (76 aa).

This sequence belongs to the SmrB family. Associates with collided ribosomes, but not with correctly translating polysomes.

In terms of biological role, acts as a ribosome collision sensor. Detects stalled/collided disomes (pairs of ribosomes where the leading ribosome is stalled and a second ribosome has collided with it) and endonucleolytically cleaves mRNA at the 5' boundary of the stalled ribosome. Stalled/collided disomes form a new interface (primarily via the 30S subunits) that binds SmrB. Cleaved mRNA becomes available for tmRNA ligation, leading to ribosomal subunit dissociation and rescue of stalled ribosomes. The sequence is that of Ribosome rescue factor SmrB from Aliivibrio salmonicida (strain LFI1238) (Vibrio salmonicida (strain LFI1238)).